Reading from the N-terminus, the 69-residue chain is UPF0337 protein RB0906 (69 aa).

It belongs to the UPF0337 (CsbD) family.

This chain is UPF0337 protein RB0906, found in Rhizobium meliloti (strain 1021) (Ensifer meliloti).